Here is a 299-residue protein sequence, read N- to C-terminus: Circadian clock oscillator protein KaiA (299 aa).

The segment at 1 to 135 (MQSPLSLCLF…LHLGPICTLP (135 aa)) is psR domain, binds oxidized quinones. One can recognise a KaiA N-terminal domain in the interval 1–169 (MQSPLSLCLF…RLADKLKERL (169 aa)). The interval 170–178 (GYLGVYYKR) is flexible linker. Positions 179 to 287 (KPSHFYRNFS…GEMYRRSIPR (109 aa)) constitute a KaiA C-terminal domain.

This sequence belongs to the KaiA family. As to quaternary structure, homodimer. The KaiABC1 complex composition changes during the circadian cycle to control KaiC1 phosphorylation. Complexes KaiC1(6), KaiA(2-4):KaiC1(6), KaiB(6):KaiC1(6) and KaiC1(6):KaiB(6):KaiA(12) are among the most important forms, many form cooperatively. KaiA and CikA bind to the same region of the KaiB(fs) form and therefore compete. Interacts with KaiC1 but not KaiC2 or KaiC3. Interacts with itself, not seen to interact with other Kai proteins.

Key component of the KaiABC oscillator complex, which constitutes the main circadian regulator in cyanobacteria. Complex composition changes during the circadian cycle to control KaiC phosphorylation. KaiA stimulates KaiC autophosphorylation, while KaiB sequesters KaiA, leading to KaiC autodephosphorylation. KaiA binding to the KaiC CII domain during the subjective day yields KaiA(2-4):KaiC(6) complexes which stimulate KaiC autophosphorylation. Phospho-Ser-431 KaiC accumulation triggers binding of KaiB during the subjective night to form the KaiB(6):KaiC(6) complex, leading to changes in the output regulators CikA and SasA. KaiB(6):KaiC(6) formation exposes a site for KaiA binding on KaiB that sequesters KaiA from KaiC's CII domain, making the KaiC(6):KaiB(6):KaiA(12) complex resulting in KaiC autodephosphorylation. Complete dephosphorylation of KaiC leads to dissociation of KaiA(2):KaiB(1), completing 1 cycle of the Kai oscillator. Functionally, component of the oscillator and circadian clock in this organism, enhances fitness in a rhythmic environment. Stimulates KaiC1 to autophosphorylate, has no effect on the kinase activity of KaiC2 or KaiC3. Its function is as follows. Binds oxidized quinones via the N-terminal PsR domain, allowing it to sense redox changes and possibly mediate clock input. This is Circadian clock oscillator protein KaiA from Synechocystis sp. (strain ATCC 27184 / PCC 6803 / Kazusa).